The sequence spans 336 residues: Izumo sperm-egg fusion protein 1 (336 aa).

The signal sequence occupies residues 1–16 (MTLPILLGWFLTLCSS). The region spanning 158 to 247 (PPLDCGEHHL…LKDQKGTALS (90 aa)) is the Ig-like C2-type domain. A disulfide bridge connects residues Cys-179 and Cys-236. The chain crosses the membrane as a helical span at residues 287–307 (SFLTVLILLTVLSITGSLIII).

It belongs to the Izumo family. As to quaternary structure, forms a complex with tmem81 and spaca6 on spermatocyte cell membrane. The complex binds to oocyte protein bncr. In terms of tissue distribution, expressed in sperm.

The protein resides in the cell membrane. It is found in the cytoplasmic vesicle. The protein localises to the secretory vesicle. It localises to the acrosome membrane. Essential sperm cell-surface protein required for fertilization by acting as a ligand for bncr receptor on egg. The interaction of the complex izumo1:spaca6:tmemt81 with bncr is a necessary adhesion event between sperm and egg that is required for fertilization. This chain is Izumo sperm-egg fusion protein 1, found in Danio rerio (Zebrafish).